A 267-amino-acid chain; its full sequence is Glutamate racemase (267 aa).

Residues 9-10 (DS) and 41-42 (YS) contribute to the substrate site. Cys73 acts as the Proton donor/acceptor in catalysis. A substrate-binding site is contributed by 74-75 (NT). Residue Cys184 is the Proton donor/acceptor of the active site. 185–186 (TH) is a substrate binding site.

The protein belongs to the aspartate/glutamate racemases family.

It catalyses the reaction L-glutamate = D-glutamate. Its pathway is cell wall biogenesis; peptidoglycan biosynthesis. Functionally, provides the (R)-glutamate required for cell wall biosynthesis. The polypeptide is Glutamate racemase (Glaesserella parasuis serovar 5 (strain SH0165) (Haemophilus parasuis)).